Consider the following 248-residue polypeptide: MSGDLSRCLGKGSCPPGPVPEGVIRIYSMRFCPYSHRARLVLKAKGIRHEVININLKSKPDWYYTKHPFGQIPVLENSQCQLVYESVIACEYLDDVYPGRKLFPYDPYERARQKMLLELFCKVPPLSKECLIALRCGRDCTDLKVALRQELCNMEEILEYQNTTFFGGDCISMIDYLVWPWFERLDVYGLADCVNHTPMLRLWIASMKQDPAVCALHTDKSVFLGFLNLYFQNNPCAFDFGLCNPIIR.

The region spanning 22-101 (GVIRIYSMRF…YLDDVYPGRK (80 aa)) is the GST N-terminal domain. Catalysis depends on Cys32, which acts as the Nucleophile. Residues Lys59, Ile72, and 85–86 (ES) each bind glutathione. The GST C-terminal domain occupies 106-231 (DPYERARQKM…VFLGFLNLYF (126 aa)).

Belongs to the GST superfamily. Omega family.

The catalysed reaction is RX + glutathione = an S-substituted glutathione + a halide anion + H(+). It catalyses the reaction L-dehydroascorbate + 2 glutathione = glutathione disulfide + L-ascorbate. The enzyme catalyses methylarsonate + 2 glutathione + H(+) = methylarsonous acid + glutathione disulfide + H2O. Exhibits glutathione-dependent thiol transferase activity. Has high dehydroascorbate reductase activity and may contribute to the recycling of ascorbic acid. Participates in the biotransformation of inorganic arsenic and reduces monomethylarsonic acid (MMA). The polypeptide is Glutathione S-transferase omega-2 (Gsto2) (Mus musculus (Mouse)).